Consider the following 458-residue polypeptide: Elongation factor 1-alpha (458 aa).

G2 carries the post-translational modification N,N,N-trimethylglycine. The residue at position 3 (K3) is an N6,N6-dimethyllysine; alternate. K3 is modified (N6-methyllysine; alternate). The 236-residue stretch at 5-240 (KTHVNVVVIG…DAIEPPVRPS (236 aa)) folds into the tr-type G domain. A G1 region spans residues 14–21 (GHVDSGKS). 14-21 (GHVDSGKS) contributes to the GTP binding site. Residue K30 is modified to N6-methyllysine. The segment at 70–74 (GITID) is G2. K79 carries the N6,N6,N6-trimethyllysine modification. The segment at 91–94 (DAPG) is G3. Residues 91–95 (DAPGH) and 153–156 (NKMD) each bind GTP. Residues 153–156 (NKMD) form a G4 region. The tract at residues 192-194 (SGW) is G5. At K316 the chain carries N6,N6-dimethyllysine; alternate. K316 carries the post-translational modification N6-methyllysine; alternate. At K390 the chain carries N6-methyllysine.

The protein belongs to the TRAFAC class translation factor GTPase superfamily. Classic translation factor GTPase family. EF-Tu/EF-1A subfamily.

The protein localises to the cytoplasm. In terms of biological role, this protein promotes the GTP-dependent binding of aminoacyl-tRNA to the A-site of ribosomes during protein biosynthesis. The sequence is that of Elongation factor 1-alpha (TEF-2) from Mucor circinelloides f. lusitanicus (Mucor racemosus var. lusitanicus).